We begin with the raw amino-acid sequence, 318 residues long: uncharacterized protein (318 aa).

This is an uncharacterized protein from Ictaluridae (bullhead catfishes).